Here is a 940-residue protein sequence, read N- to C-terminus: Isoleucine--tRNA ligase (940 aa).

The 'HIGH' region motif lies at 58–68 (PYANGSIHIGH). Residue Glu563 coordinates L-isoleucyl-5'-AMP. The short motif at 604 to 608 (KMSKS) is the 'KMSKS' region element. Residue Lys607 coordinates ATP. The Zn(2+) site is built by Cys902, Cys905, Cys922, and Cys925.

This sequence belongs to the class-I aminoacyl-tRNA synthetase family. IleS type 1 subfamily. Monomer. Requires Zn(2+) as cofactor.

Its subcellular location is the cytoplasm. It catalyses the reaction tRNA(Ile) + L-isoleucine + ATP = L-isoleucyl-tRNA(Ile) + AMP + diphosphate. Functionally, catalyzes the attachment of isoleucine to tRNA(Ile). As IleRS can inadvertently accommodate and process structurally similar amino acids such as valine, to avoid such errors it has two additional distinct tRNA(Ile)-dependent editing activities. One activity is designated as 'pretransfer' editing and involves the hydrolysis of activated Val-AMP. The other activity is designated 'posttransfer' editing and involves deacylation of mischarged Val-tRNA(Ile). The sequence is that of Isoleucine--tRNA ligase from Marinomonas sp. (strain MWYL1).